A 133-amino-acid chain; its full sequence is NADPH-dependent 7-cyano-7-deazaguanine reductase (133 aa).

Residue Cys49 is the Thioimide intermediate of the active site. The active-site Proton donor is Asp56. Substrate contacts are provided by residues 71-73 and 90-91; these read IEL and HE.

The protein belongs to the GTP cyclohydrolase I family. QueF type 1 subfamily.

Its subcellular location is the cytoplasm. It catalyses the reaction 7-aminomethyl-7-carbaguanine + 2 NADP(+) = 7-cyano-7-deazaguanine + 2 NADPH + 3 H(+). It participates in tRNA modification; tRNA-queuosine biosynthesis. Functionally, catalyzes the NADPH-dependent reduction of 7-cyano-7-deazaguanine (preQ0) to 7-aminomethyl-7-deazaguanine (preQ1). The sequence is that of NADPH-dependent 7-cyano-7-deazaguanine reductase from Leptospira interrogans serogroup Icterohaemorrhagiae serovar copenhageni (strain Fiocruz L1-130).